The sequence spans 176 residues: 4-hydroxylaminobenzoate lyase (176 aa).

This sequence belongs to the PnbB family.

It carries out the reaction 4-hydroxylaminobenzoate + H2O + H(+) = 3,4-dihydroxybenzoate + NH4(+). In terms of biological role, lyase involved in the degradation of nitroaromatic compounds. Catalyzes the conversion of 4-hydroxylaminobenzoate to 3,4-dihydroxybenzoate (protocatechuate). Required for the catabolism of 4-nitrotoluene. This is 4-hydroxylaminobenzoate lyase from Pseudomonas putida (Arthrobacter siderocapsulatus).